The sequence spans 664 residues: Kinesin-like protein KIF2B (664 aa).

Thr-125 bears the Phosphothreonine; by PLK1 mark. Residues 149 to 177 (CLREIEKLQKQREKRRRLQLEIRARRALD) are a coiled coil. Ser-204 is modified (phosphoserine; by PLK1). In terms of domain architecture, Kinesin motor spans 213-543 (RICVCVRKRP…LRYANRVKEL (331 aa)). An ATP-binding site is contributed by 303–310 (GQTGSGKT). The interval 583–607 (VQKEEEKESDELTSTKEPAASWSRS) is disordered. Residues 642–663 (VLTEIQKKLQLLRDDLQKKSQA) are a coiled coil.

This sequence belongs to the TRAFAC class myosin-kinesin ATPase superfamily. Kinesin family. MCAK/KIF2 subfamily. In terms of processing, phosphorylation at Thr-125 by PLK1 is required for activity in the correction of kinetochore-microtubules attachment errors, while phosphorylation at Ser-204 also by PLK1 is required for the kinetochore localization and activity in prometaphase.

The protein resides in the cytoplasm. It is found in the cytoskeleton. The protein localises to the microtubule organizing center. It localises to the centrosome. Its subcellular location is the spindle. The protein resides in the chromosome. It is found in the centromere. The protein localises to the kinetochore. Functionally, plus end-directed microtubule-dependent motor required for spindle assembly and chromosome movement. Has microtubule depolymerization activity. Plays a role in chromosome congression. This Rattus norvegicus (Rat) protein is Kinesin-like protein KIF2B.